Reading from the N-terminus, the 1873-residue chain is Voltage-dependent L-type calcium channel subunit alpha-1S (1873 aa).

A disordered region spans residues Met-1–Ile-23. The Cytoplasmic segment spans residues Met-1–Lys-51. The I repeat unit spans residues Asn-38–Phe-337. The helical transmembrane segment at Pro-52–Val-70 threads the bilayer. Residues Tyr-71–Gly-85 lie on the Extracellular side of the membrane. Asn-79 carries an N-linked (GlcNAc...) asparagine glycan. The helical transmembrane segment at Leu-86–Ile-106 threads the bilayer. Topologically, residues Ala-107 to Asp-115 are cytoplasmic. Residues Ala-116–Thr-136 form a helical membrane-spanning segment. The Extracellular segment spans residues Val-137 to Asp-160. A helical membrane pass occupies residues Val-161–Val-179. Topologically, residues Pro-180 to Leu-196 are cytoplasmic. Residues Phe-197–Phe-218 form a helical membrane-spanning segment. Topologically, residues Lys-219–Gly-279 are extracellular. Intrachain disulfides connect Cys-226–Cys-254 and Cys-245–Cys-261. Asn-257 carries an N-linked (GlcNAc...) asparagine glycan. The segment at residues Phe-280 to Val-301 is an intramembrane region (pore-forming). Positions Thr-290–Gly-293 match the Selectivity filter of repeat I motif. Ca(2+) is bound at residue Glu-292. At Asn-302–Trp-309 the chain is on the extracellular side. The chain crosses the membrane as a helical span at residues Pro-310 to Leu-330. The Cytoplasmic segment spans residues Gly-331–Lys-432. The interval Gln-357–Glu-374 is binding to the beta subunit. A phosphoserine mark is found at Ser-393 and Ser-397. An II repeat occupies Asn-418–Leu-664. Residues Val-433–Ser-451 traverse the membrane as a helical segment. At Glu-452–Arg-462 the chain is on the extracellular side. A helical membrane pass occupies residues Leu-463–Met-483. Residues Tyr-484–Ser-494 are Cytoplasmic-facing. A helical transmembrane segment spans residues Ile-495 to Val-514. At Glu-515–Gly-523 the chain is on the extracellular side. The chain crosses the membrane as a helical span at residues Ile-524–Trp-542. Topologically, residues Thr-543–Ser-561 are cytoplasmic. A helical membrane pass occupies residues Leu-562 to Phe-581. Topologically, residues Gly-582 to Pro-601 are extracellular. The pore-forming intramembrane region spans Gln-602 to Gly-623. The Selectivity filter of repeat II signature appears at Thr-612–Asp-615. Glu-614 contributes to the Ca(2+) binding site. Residues Ile-624–Pro-633 are Extracellular-facing. A helical transmembrane segment spans residues Gly-634–Leu-653. Residues Asn-654–Thr-799 lie on the Cytoplasmic side of the membrane. Disordered regions lie at residues Lys-675–Thr-717 and Glu-731–Arg-757. Position 687 is a phosphoserine; by PKA (Ser-687). Over residues Leu-690–Gly-711 the composition is skewed to basic and acidic residues. The segment covering Pro-742–Glu-751 has biased composition (acidic residues). Positions Glu-747–Pro-760 are interaction with STAC, STAC2 and STAC3 (via SH3 domains). One copy of the III repeat lies at Asn-786–Phe-1068. Residues Trp-800–Ala-818 form a helical membrane-spanning segment. Over Glu-819 to Gln-830 the chain is Extracellular. A helical transmembrane segment spans residues Ile-831–Lys-850. Topologically, residues Met-851–Asn-866 are cytoplasmic. The helical transmembrane segment at Tyr-867–Leu-885 threads the bilayer. Residues Glu-886–Val-892 lie on the Extracellular side of the membrane. A helical transmembrane segment spans residues Val-893–Ala-911. The Cytoplasmic portion of the chain corresponds to Lys-912–Asn-930. Residues Ile-931–Phe-950 traverse the membrane as a helical segment. Over Lys-951–Val-1000 the chain is Extracellular. A disulfide bond links Cys-957 and Cys-968. The tract at residues Arg-988–Lys-1077 is dihydropyridine binding. Positions Leu-1001–Tyr-1021 form an intramembrane region, pore-forming. The Selectivity filter of repeat III motif lies at Thr-1012–Gly-1015. Glu-1014 is a Ca(2+) binding site. At Lys-1022 to Arg-1038 the chain is on the extracellular side. Residues Val-1039–Phe-1060 traverse the membrane as a helical segment. Residues Val-1061 to Ser-1118 are Cytoplasmic-facing. The stretch at Asn-1105–Phe-1384 is one IV repeat. The chain crosses the membrane as a helical span at residues Tyr-1119–Tyr-1140. N-linked (GlcNAc...) asparagine glycosylation is present at Asn-1141. The Extracellular segment spans residues Asn-1141–His-1148. The chain crosses the membrane as a helical span at residues Ile-1149–Met-1170. The Cytoplasmic segment spans residues Ala-1171–Asp-1180. The chain crosses the membrane as a helical span at residues Pro-1181–Ser-1200. Topologically, residues Glu-1201 to Ser-1231 are extracellular. A helical membrane pass occupies residues Ser-1232 to Ala-1250. Residues Glu-1251–Pro-1268 are Cytoplasmic-facing. Residues Tyr-1269–Phe-1289 traverse the membrane as a helical segment. Residues Gly-1290–Gln-1311 are Extracellular-facing. Residues Ala-1312–Leu-1330 constitute an intramembrane region (pore-forming). The Selectivity filter of repeat IV signature appears at Thr-1321–Ala-1324. Residues Ala-1331 to Phe-1356 lie on the Extracellular side of the membrane. The segment at Leu-1337–Lys-1403 is dihydropyridine binding. A disulfide bridge links Cys-1338 with Cys-1352. Residues Glu-1349–Trp-1391 are phenylalkylamine binding. The helical transmembrane segment at Ala-1357 to Met-1381 threads the bilayer. The Cytoplasmic segment spans residues Asp-1382–Leu-1873. Residues Lys-1522 to Glu-1542 are interaction with calmodulin. Ser-1575 is subject to Phosphoserine; by PKA and CAMK2. Ser-1617 carries the phosphoserine; by PKA modification. Positions Met-1731–Ser-1780 are disordered. Over residues Pro-1751–Thr-1776 the composition is skewed to basic and acidic residues.

The protein belongs to the calcium channel alpha-1 subunit (TC 1.A.1.11) family. CACNA1S subfamily. Component of a calcium channel complex consisting of a pore-forming alpha subunit (CACNA1S) and the ancillary subunits CACNB1 or CACNB2, CACNG1 and CACNA2D1. The channel complex contains alpha, beta, gamma and delta subunits in a 1:1:1:1 ratio, i.e. it contains either CACNB1 or CACNB2. CACNA1S channel activity is modulated by the auxiliary subunits (CACNB1 or CACNB2, CACNG1 and CACNA2D1). Interacts with DYSF and JSRP1. Interacts with RYR1. Interacts with STAC, STAC2 and STAC3 (via their SH3 domains). Interacts with CALM. The alpha-1S subunit is found in two isoforms in the skeletal muscle: a minor form of 212 kDa containing the complete amino acid sequence, and a major form of 190 kDa derived from the full-length form by post-translational proteolysis close to Phe-1690. Post-translationally, phosphorylated. Phosphorylation by PKA activates the calcium channel. Both the minor and major forms are phosphorylated in vitro by PKA. Phosphorylation at Ser-1575 is involved in beta-adrenergic-mediated regulation of the channel. As to expression, skeletal muscle specific.

The protein resides in the cell membrane. It is found in the sarcolemma. It localises to the T-tubule. It carries out the reaction Ca(2+)(in) = Ca(2+)(out). Its activity is regulated as follows. Channel activity is blocked by dihydropyridines (DHP), phenylalkylamines, and by benzothiazepines. In terms of biological role, pore-forming, alpha-1S subunit of the voltage-gated calcium channel that gives rise to L-type calcium currents in skeletal muscle. Calcium channels containing the alpha-1S subunit play an important role in excitation-contraction coupling in skeletal muscle via their interaction with RYR1, which triggers Ca(2+) release from the sarcoplasmic reticulum and ultimately results in muscle contraction. Long-lasting (L-type) calcium channels belong to the 'high-voltage activated' (HVA) group. In Homo sapiens (Human), this protein is Voltage-dependent L-type calcium channel subunit alpha-1S (CACNA1S).